Here is a 459-residue protein sequence, read N- to C-terminus: tRNA modification GTPase MnmE (459 aa).

The (6S)-5-formyl-5,6,7,8-tetrahydrofolate site is built by Arg22, Glu85, and Arg124. The TrmE-type G domain occupies 221–380 (GLSTVIVGKP…LEIQIRDLFF (160 aa)). Asn231 lines the K(+) pocket. GTP contacts are provided by residues 231 to 236 (NVGKSS), 250 to 256 (TEVAGTT), and 275 to 278 (DTAG). Ser235 serves as a coordination point for Mg(2+). K(+)-binding residues include Thr250, Val252, and Thr255. Residue Thr256 participates in Mg(2+) binding. (6S)-5-formyl-5,6,7,8-tetrahydrofolate is bound at residue Lys459.

The protein belongs to the TRAFAC class TrmE-Era-EngA-EngB-Septin-like GTPase superfamily. TrmE GTPase family. Homodimer. Heterotetramer of two MnmE and two MnmG subunits. It depends on K(+) as a cofactor.

Its subcellular location is the cytoplasm. Functionally, exhibits a very high intrinsic GTPase hydrolysis rate. Involved in the addition of a carboxymethylaminomethyl (cmnm) group at the wobble position (U34) of certain tRNAs, forming tRNA-cmnm(5)s(2)U34. This is tRNA modification GTPase MnmE from Staphylococcus aureus (strain MW2).